Reading from the N-terminus, the 550-residue chain is Chaperonin GroEL (550 aa).

Residues 30-33, lysine 51, 87-91, glycine 415, and aspartate 497 each bind ATP; these read TLGP and DGTTT.

The protein belongs to the chaperonin (HSP60) family. In terms of assembly, forms a cylinder of 14 subunits composed of two heptameric rings stacked back-to-back. Interacts with the co-chaperonin GroES.

It localises to the cytoplasm. The catalysed reaction is ATP + H2O + a folded polypeptide = ADP + phosphate + an unfolded polypeptide.. In terms of biological role, together with its co-chaperonin GroES, plays an essential role in assisting protein folding. The GroEL-GroES system forms a nano-cage that allows encapsulation of the non-native substrate proteins and provides a physical environment optimized to promote and accelerate protein folding. The sequence is that of Chaperonin GroEL from Yersinia enterocolitica serotype O:8 / biotype 1B (strain NCTC 13174 / 8081).